Here is a 227-residue protein sequence, read N- to C-terminus: MAYPMQLGFQDATSPIMEELLHFHDHTLMIVFLISSLVLYIISLMLTTKLTHTSTMDAQEVETIWTILPAIILIMIALPSLRILYMMDEINNPSLTVKTMGHQWYWSYEYTDYEDLSFDSYMIPTSELKPGELRLLEVDNRVVLPMEMTVRMLISSEDVLPSWAVPSLGLKTDAIPGRLNQTTLMSTRPGLFYGQCSEICGSNHSFMPIVLELVPLKYFEKWSASML.

Residues 1 to 14 (MAYPMQLGFQDATS) are Mitochondrial intermembrane-facing. The helical transmembrane segment at 15-45 (PIMEELLHFHDHTLMIVFLISSLVLYIISLM) threads the bilayer. The Mitochondrial matrix segment spans residues 46–59 (LTTKLTHTSTMDAQ). The helical transmembrane segment at 60–87 (EVETIWTILPAIILIMIALPSLRILYMM) threads the bilayer. Residues 88-227 (DEINNPSLTV…YFEKWSASML (140 aa)) are Mitochondrial intermembrane-facing. Cu cation contacts are provided by Cys196, Glu198, Cys200, His204, and Met207. Glu198 provides a ligand contact to Mg(2+). Tyr218 is modified (phosphotyrosine).

This sequence belongs to the cytochrome c oxidase subunit 2 family. Component of the cytochrome c oxidase (complex IV, CIV), a multisubunit enzyme composed of 14 subunits. The complex is composed of a catalytic core of 3 subunits MT-CO1, MT-CO2 and MT-CO3, encoded in the mitochondrial DNA, and 11 supernumerary subunits COX4I, COX5A, COX5B, COX6A, COX6B, COX6C, COX7A, COX7B, COX7C, COX8 and NDUFA4, which are encoded in the nuclear genome. The complex exists as a monomer or a dimer and forms supercomplexes (SCs) in the inner mitochondrial membrane with NADH-ubiquinone oxidoreductase (complex I, CI) and ubiquinol-cytochrome c oxidoreductase (cytochrome b-c1 complex, complex III, CIII), resulting in different assemblies (supercomplex SCI(1)III(2)IV(1) and megacomplex MCI(2)III(2)IV(2)). Found in a complex with TMEM177, COA6, COX18, COX20, SCO1 and SCO2. Interacts with TMEM177 in a COX20-dependent manner. Interacts with COX20. Interacts with COX16. Cu cation is required as a cofactor.

It localises to the mitochondrion inner membrane. The enzyme catalyses 4 Fe(II)-[cytochrome c] + O2 + 8 H(+)(in) = 4 Fe(III)-[cytochrome c] + 2 H2O + 4 H(+)(out). Component of the cytochrome c oxidase, the last enzyme in the mitochondrial electron transport chain which drives oxidative phosphorylation. The respiratory chain contains 3 multisubunit complexes succinate dehydrogenase (complex II, CII), ubiquinol-cytochrome c oxidoreductase (cytochrome b-c1 complex, complex III, CIII) and cytochrome c oxidase (complex IV, CIV), that cooperate to transfer electrons derived from NADH and succinate to molecular oxygen, creating an electrochemical gradient over the inner membrane that drives transmembrane transport and the ATP synthase. Cytochrome c oxidase is the component of the respiratory chain that catalyzes the reduction of oxygen to water. Electrons originating from reduced cytochrome c in the intermembrane space (IMS) are transferred via the dinuclear copper A center (CU(A)) of subunit 2 and heme A of subunit 1 to the active site in subunit 1, a binuclear center (BNC) formed by heme A3 and copper B (CU(B)). The BNC reduces molecular oxygen to 2 water molecules using 4 electrons from cytochrome c in the IMS and 4 protons from the mitochondrial matrix. This Ovis aries (Sheep) protein is Cytochrome c oxidase subunit 2 (MT-CO2).